The primary structure comprises 495 residues: F(420)H(2) dehydrogenase subunit M (495 aa).

Transmembrane regions (helical) follow at residues 1–21 (MLPV…VTFF), 27–47 (LAAG…LYAY), 57–77 (MQFY…SVGI), 80–100 (VSMP…LFTW), 108–128 (NRFY…FVAL), 130–150 (FVVF…IVNL), 163–183 (FFIY…GLFY), 215–235 (IFLA…FHSW), 249–269 (ILFI…LPML), 277–297 (LMIM…ALLA), 315–335 (MGYV…GAMF), 338–358 (FSHG…QTAA), 378–398 (VAMM…GFIA), 412–432 (VFVV…LWAM), and 450–470 (INSI…YFGL).

It belongs to the complex I subunit 4 family. In terms of assembly, the FPO complex is composed of at least 13 different subunits. FpoA, FpoH, FpoJ, FpoK, FpoL, FpoM and FpoN proteins constitute the membrane sector of the complex.

The protein resides in the cell membrane. It catalyses the reaction methanophenazine + reduced coenzyme F420-(gamma-L-Glu)(n) = dihydromethanophenazine + oxidized coenzyme F420-(gamma-L-Glu)(n) + H(+). Functionally, component of the F(420)H(2) dehydrogenase (FPO complex) which is part of the energy-conserving F(420)H(2):heterodisulfide oxidoreductase system. The membrane-bound electron transfer system of the complex plays an important role in the metabolism of methylotrophic methanogens when the organisms grow on methanol or methylamines. Catalyzes the oxidation of methanophenazine to dihydromethanophenazine. It shuttles electrons from F(420)H(2), via FAD and iron-sulfur (Fe-S) centers, to methanophenazine (an electron carrier in the membrane). It couples the redox reaction to proton translocation (for every two electrons transferred, two hydrogen ions are translocated across the cytoplasmic membrane), and thus conserves the redox energy in a proton gradient. It also catalyzes the oxidation of F(420)H(2) with quinones such as 2,3-dimethyl-1,4-naphthoquinone, 2-methyl-1,4-naphthoquinone and tetramethyl-p-benzoquinone. This Methanosarcina mazei (strain ATCC BAA-159 / DSM 3647 / Goe1 / Go1 / JCM 11833 / OCM 88) (Methanosarcina frisia) protein is F(420)H(2) dehydrogenase subunit M (fpoM).